Reading from the N-terminus, the 189-residue chain is Fucolectin-5 (189 aa).

A signal peptide spans 1-31; the sequence is MKTCNLTDRMKVKMIMLLFQILAISTLQSDS. The tract at residues 40–189 is F5/8 type C-like; sequence QENVAVRGKA…VEVNALLPAN (150 aa). Residues Asp70, Asn72, and Ser81 each contribute to the Ca(2+) site. Cystine bridges form between Cys82–Cys178, Cys114–Cys115, and Cys140–Cys156. Alpha-L-fucose-binding residues include His84 and Arg111. Positions 111 to 113 match the Cell attachment site motif; sequence RGD. Arg118 provides a ligand contact to alpha-L-fucose. Ca(2+) contacts are provided by Cys178 and Glu179.

The protein belongs to the fucolectin family. In terms of assembly, homotrimer. In terms of tissue distribution, gill mucous cells.

The protein localises to the secreted. Functionally, acts as a defensive agent. Recognizes blood group fucosylated oligosaccharides including A, B, H and Lewis B-type antigens. Does not recognize Lewis A antigen and has low affinity for monovalent haptens. The sequence is that of Fucolectin-5 from Anguilla japonica (Japanese eel).